We begin with the raw amino-acid sequence, 478 residues long: Muscarinic acetylcholine receptor M4 (478 aa).

At 1–30 (MXNFTPVNGSSANQSVRLVTAAHNHLETVE) the chain is on the extracellular side. N8 and N13 each carry an N-linked (GlcNAc...) asparagine glycan. Residues 31–53 (MVFIATVTGSLSLVTVVGNILVM) form a helical membrane-spanning segment. At 54-67 (LSIKVNRQLQTVNN) the chain is on the cytoplasmic side. Residues 68–88 (YFLFSLGCADLIIGAFSMNLY) traverse the membrane as a helical segment. The Extracellular segment spans residues 89 to 105 (TLYIIKGYWPLGAVVCD). Residues C104 and C184 are joined by a disulfide bond. Residues 106-127 (LWLALDYVVSNASVMNLLIISF) form a helical membrane-spanning segment. Residues 128-147 (DRYFCVTKPLTYPARRTTKM) are Cytoplasmic-facing. The chain crosses the membrane as a helical span at residues 148-170 (AGLMIAAAWVLSFVLWAPAILFW). Over 171–192 (QFVVGKRTVPDNQCFIQFLSNP) the chain is Extracellular. A helical transmembrane segment spans residues 193 to 215 (AVTFGTAIAAFYLPVVIMTVLYI). The Cytoplasmic portion of the chain corresponds to 216 to 400 (HISLASRSRV…AARERKVTRT (185 aa)). The tract at residues 271–333 (LEEAPPPALP…APTLQPRTLN (63 aa)) is disordered. Pro residues predominate over residues 274–285 (APPPALPPPPRP). A compositionally biased stretch (polar residues) spans 293–303 (NESSSGSATQN). Over residues 310 to 332 (TELSTAEATTPALPAPTLQPRTL) the composition is skewed to low complexity. Residues 401–421 (IFAILLAFILTWTPYNVMVLV) form a helical membrane-spanning segment. At 422-435 (NTFCQSCIPERVWS) the chain is on the extracellular side. The helical transmembrane segment at 436–455 (IGYWLCYVNSTINPACYALC) threads the bilayer. The Cytoplasmic portion of the chain corresponds to 456 to 478 (NATFKKTFRHLLLCQYRNIGTAR). Phosphothreonine occurs at positions 458, 462, and 476.

The protein belongs to the G-protein coupled receptor 1 family. Muscarinic acetylcholine receptor subfamily. CHRM4 sub-subfamily.

It localises to the cell membrane. The protein localises to the postsynaptic cell membrane. Functionally, the muscarinic acetylcholine receptor mediates various cellular responses, including inhibition of adenylate cyclase, breakdown of phosphoinositides and modulation of potassium channels through the action of G proteins. Primary transducing effect is inhibition of adenylate cyclase. In Rattus norvegicus (Rat), this protein is Muscarinic acetylcholine receptor M4 (Chrm4).